We begin with the raw amino-acid sequence, 559 residues long: Poly(U)-binding-splicing factor PUF60 (559 aa).

The tract at residues 1–516 is inhibits homodimerization; that stretch reads MATATIALQV…EDAEIIVKIF (516 aa). Residues Gln14 and Lys43 each participate in a glycyl lysine isopeptide (Lys-Gly) (interchain with G-Cter in SUMO2) cross-link. Thr60 bears the Phosphothreonine mark. Residues 77–559 form an inhibits transcriptional repression, interaction with ERCC3 and apoptosis induction region; the sequence is QSIKSVLVKQ…ERFDNSDLSA (483 aa). A Glycyl lysine isopeptide (Lys-Gly) (interchain with G-Cter in SUMO2) cross-link involves residue Lys80. The residue at position 112 (Ser112) is a Phosphoserine. 2 RRM domains span residues 129 to 207 and 226 to 304; these read CRVY…RPSN and NRIY…KAVT. At Ser244 the chain carries Phosphoserine. Lys251 is modified (N6-acetyllysine). The residue at position 314 (Thr314) is a Phosphothreonine. The disordered stretch occupies residues 416-437; the sequence is KKEKEEEELFPESERPEMLSEQ. Lys419 participates in a covalent cross-link: Glycyl lysine isopeptide (Lys-Gly) (interchain with G-Cter in SUMO2). The span at 427–437 shows a compositional bias: basic and acidic residues; sequence ESERPEMLSEQ. Lys454 is modified (N6-acetyllysine). Lys458 is covalently cross-linked (Glycyl lysine isopeptide (Lys-Gly) (interchain with G-Cter in SUMO2)). The RRM 3; atypical domain maps to 462 to 549; it reads TVMVLRNMVD…RKVVAEVYDQ (88 aa).

The protein belongs to the RRM half pint family. As to quaternary structure, homodimer. Associates with the spliceosome. Found in a complex with RO60 and Y5 RNA. Found in a complex with FUBP1 and far upstream element (FUSE) DNA segment. Interacts directly with ERCC3. Interacts with CDK7 and GTF2H1. Interacts with SRSF11/P54. Does not interact with ERCC3 in xeroderma pigmentosum complementation group B (XPB) cells. Interacts with ARGLU1; interaction may be involved in ARGLU1-mediated modulation of alternative splicing. As to expression, isoform 2 is expressed in colonic epithelium and colorectal epithelium cancer (at protein level). Isoform 6 is expressed in colorectal epithelial cancer but below detection level in colonic epithelium. Expressed in heart, brain, placenta, lung, liver, skeletal muscle, kidney, pancreas, spleen, thymus, prostate, testis, ovary, small intestine, colon and peripheral blood leukocytes.

Its subcellular location is the nucleus. In terms of biological role, DNA- and RNA-binding protein, involved in several nuclear processes such as pre-mRNA splicing, apoptosis and transcription regulation. In association with FUBP1 regulates MYC transcription at the P2 promoter through the core-TFIIH basal transcription factor. Acts as a transcriptional repressor through the core-TFIIH basal transcription factor. Represses FUBP1-induced transcriptional activation but not basal transcription. Decreases ERCC3 helicase activity. Does not repress TFIIH-mediated transcription in xeroderma pigmentosum complementation group B (XPB) cells. Is also involved in pre-mRNA splicing. Promotes splicing of an intron with weak 3'-splice site and pyrimidine tract in a cooperative manner with U2AF2. Involved in apoptosis induction when overexpressed in HeLa cells. Isoform 6 failed to repress MYC transcription and inhibited FIR-induced apoptosis in colorectal cancer. Isoform 6 may contribute to tumor progression by enabling increased MYC expression and greater resistance to apoptosis in tumors than in normal cells. Modulates alternative splicing of several mRNAs. Binds to relaxed DNA of active promoter regions. Binds to the pyrimidine tract and 3'-splice site regions of pre-mRNA; binding is enhanced in presence of U2AF2. Binds to Y5 RNA in association with RO60. Binds to poly(U) RNA. The sequence is that of Poly(U)-binding-splicing factor PUF60 from Homo sapiens (Human).